Consider the following 314-residue polypeptide: tRNA dimethylallyltransferase (314 aa).

11–18 serves as a coordination point for ATP; it reads GPTGSGKT. 13-18 is a substrate binding site; it reads TGSGKT. The segment at 36 to 39 is interaction with substrate tRNA; it reads DSMQ.

Belongs to the IPP transferase family. As to quaternary structure, monomer. It depends on Mg(2+) as a cofactor.

The catalysed reaction is adenosine(37) in tRNA + dimethylallyl diphosphate = N(6)-dimethylallyladenosine(37) in tRNA + diphosphate. Catalyzes the transfer of a dimethylallyl group onto the adenine at position 37 in tRNAs that read codons beginning with uridine, leading to the formation of N6-(dimethylallyl)adenosine (i(6)A). The polypeptide is tRNA dimethylallyltransferase (Chlamydia trachomatis serovar D (strain ATCC VR-885 / DSM 19411 / UW-3/Cx)).